Consider the following 188-residue polypeptide: ATP synthase subunit b (188 aa).

The chain crosses the membrane as a helical span at residues 19–39 (VYVLGATIVSFLVLFLFITYF).

This sequence belongs to the ATPase B chain family. As to quaternary structure, F-type ATPases have 2 components, F(1) - the catalytic core - and F(0) - the membrane proton channel. F(1) has five subunits: alpha(3), beta(3), gamma(1), delta(1), epsilon(1). F(0) has three main subunits: a(1), b(2) and c(10-14). The alpha and beta chains form an alternating ring which encloses part of the gamma chain. F(1) is attached to F(0) by a central stalk formed by the gamma and epsilon chains, while a peripheral stalk is formed by the delta and b chains.

It is found in the cell membrane. Functionally, f(1)F(0) ATP synthase produces ATP from ADP in the presence of a proton or sodium gradient. F-type ATPases consist of two structural domains, F(1) containing the extramembraneous catalytic core and F(0) containing the membrane proton channel, linked together by a central stalk and a peripheral stalk. During catalysis, ATP synthesis in the catalytic domain of F(1) is coupled via a rotary mechanism of the central stalk subunits to proton translocation. In terms of biological role, component of the F(0) channel, it forms part of the peripheral stalk, linking F(1) to F(0). In Mesomycoplasma hyopneumoniae (strain 7448) (Mycoplasma hyopneumoniae), this protein is ATP synthase subunit b.